Reading from the N-terminus, the 481-residue chain is 3-isopropylmalate dehydratase large subunit (481 aa).

The [4Fe-4S] cluster site is built by Cys363, Cys423, and Cys426. Residues 432–459 (DQLKPGERSASTSNRNFEGRQGPGGRTH) are disordered.

It belongs to the aconitase/IPM isomerase family. LeuC type 1 subfamily. Heterodimer of LeuC and LeuD. [4Fe-4S] cluster serves as cofactor.

The enzyme catalyses (2R,3S)-3-isopropylmalate = (2S)-2-isopropylmalate. It participates in amino-acid biosynthesis; L-leucine biosynthesis; L-leucine from 3-methyl-2-oxobutanoate: step 2/4. Functionally, catalyzes the isomerization between 2-isopropylmalate and 3-isopropylmalate, via the formation of 2-isopropylmaleate. This chain is 3-isopropylmalate dehydratase large subunit, found in Corynebacterium glutamicum (strain R).